The primary structure comprises 391 residues: Transaldolase (391 aa).

The active-site Schiff-base intermediate with substrate is the K134. 2 consecutive EF-hand domains span residues T329–L364 and D365–L387. Residues D342, D344, D346, E353, D365, N367, D369, K371, and D376 each coordinate Ca(2+).

Belongs to the transaldolase family. Type 1 subfamily.

The protein localises to the cytoplasm. The enzyme catalyses D-sedoheptulose 7-phosphate + D-glyceraldehyde 3-phosphate = D-erythrose 4-phosphate + beta-D-fructose 6-phosphate. Its pathway is carbohydrate degradation; pentose phosphate pathway; D-glyceraldehyde 3-phosphate and beta-D-fructose 6-phosphate from D-ribose 5-phosphate and D-xylulose 5-phosphate (non-oxidative stage): step 2/3. Functionally, transaldolase is important for the balance of metabolites in the pentose-phosphate pathway. The sequence is that of Transaldolase from Thermosynechococcus vestitus (strain NIES-2133 / IAM M-273 / BP-1).